The sequence spans 183 residues: Peptide deformylase (183 aa).

Cysteine 111 and histidine 154 together coordinate Fe cation. The active site involves glutamate 155. Position 158 (histidine 158) interacts with Fe cation.

The protein belongs to the polypeptide deformylase family. Requires Fe(2+) as cofactor.

It carries out the reaction N-terminal N-formyl-L-methionyl-[peptide] + H2O = N-terminal L-methionyl-[peptide] + formate. Removes the formyl group from the N-terminal Met of newly synthesized proteins. Requires at least a dipeptide for an efficient rate of reaction. N-terminal L-methionine is a prerequisite for activity but the enzyme has broad specificity at other positions. The protein is Peptide deformylase of Staphylococcus epidermidis (strain ATCC 35984 / DSM 28319 / BCRC 17069 / CCUG 31568 / BM 3577 / RP62A).